Reading from the N-terminus, the 783-residue chain is Polyribonucleotide nucleotidyltransferase 1, mitochondrial (783 aa).

The transit peptide at 1-45 (MAACRLCCLCPCLRPLGCGPLGRPGRNRALSYLQMRALWSSTGSR) directs the protein to the mitochondrion. Residues K250, K264, and K285 each carry the N6-acetyllysine modification. Residue K552 is modified to N6-succinyllysine. A KH domain is found at 605–664 (PVVETVKVPLSKRAKFVGPGGYHLKKLQAETGVTISQVDEETFSIFAPTPTAMHEARDFI). The 72-residue stretch at 679–750 (GAVYTATITE…ADGRMRLSRK (72 aa)) folds into the S1 motif domain. S754 bears the Phosphoserine mark.

Belongs to the polyribonucleotide nucleotidyltransferase family. In terms of assembly, homotrimer; in free form. Homooligomer. Component of the mitochondrial degradosome (mtEXO) complex which is a heteropentamer containing 2 copies of SUPV3L1 and 3 copies of PNPT1. As part of the mitochondrial degradosome complex, interacts with GRSF1 in an RNA-dependent manner; the interaction enhances the activity of the complex. Interacts with TCL1A; the interaction has no effect on PNPT1 exonuclease activity.

Its subcellular location is the cytoplasm. The protein resides in the mitochondrion matrix. The protein localises to the mitochondrion intermembrane space. It carries out the reaction RNA(n+1) + phosphate = RNA(n) + a ribonucleoside 5'-diphosphate. Its function is as follows. RNA-binding protein implicated in numerous RNA metabolic processes. Catalyzes the phosphorolysis of single-stranded polyribonucleotides processively in the 3'-to-5' direction. Mitochondrial intermembrane factor with RNA-processing exoribonulease activity. Component of the mitochondrial degradosome (mtEXO) complex, that degrades 3' overhang double-stranded RNA with a 3'-to-5' directionality in an ATP-dependent manner. Involved in the degradation of non-coding mitochondrial transcripts (MT-ncRNA) and tRNA-like molecules. Required for correct processing and polyadenylation of mitochondrial mRNAs. Plays a role as a cytoplasmic RNA import factor that mediates the translocation of small RNA components, like the 5S RNA, the RNA subunit of ribonuclease P and the mitochondrial RNA-processing (MRP) RNA, into the mitochondrial matrix. Plays a role in mitochondrial morphogenesis and respiration; regulates the expression of the electron transport chain (ETC) components at the mRNA and protein levels. In the cytoplasm, shows a 3'-to-5' exoribonuclease mediating mRNA degradation activity; degrades c-myc mRNA upon treatment with IFNB1/IFN-beta, resulting in a growth arrest in melanoma cells. Regulates the stability of specific mature miRNAs in melanoma cells; specifically and selectively degrades miR-221, preferentially. Also plays a role in RNA cell surveillance by cleaning up oxidized RNAs. Binds to the RNA subunit of ribonuclease P, MRP RNA and miR-221 microRNA. This is Polyribonucleotide nucleotidyltransferase 1, mitochondrial (Pnpt1) from Mus musculus (Mouse).